A 241-amino-acid polypeptide reads, in one-letter code: UDP-2,3-diacylglucosamine hydrolase (241 aa).

Mn(2+) is bound by residues Asp8, His10, Asp41, Asn78, and His113. Substrate is bound at residue 78 to 79 (NR). Substrate-binding residues include Asp121, Ser159, Asn163, Lys166, and His194. Residues His194 and His196 each coordinate Mn(2+).

This sequence belongs to the LpxH family. Mn(2+) is required as a cofactor.

It localises to the cell inner membrane. It catalyses the reaction UDP-2-N,3-O-bis[(3R)-3-hydroxytetradecanoyl]-alpha-D-glucosamine + H2O = 2-N,3-O-bis[(3R)-3-hydroxytetradecanoyl]-alpha-D-glucosaminyl 1-phosphate + UMP + 2 H(+). It functions in the pathway glycolipid biosynthesis; lipid IV(A) biosynthesis; lipid IV(A) from (3R)-3-hydroxytetradecanoyl-[acyl-carrier-protein] and UDP-N-acetyl-alpha-D-glucosamine: step 4/6. Hydrolyzes the pyrophosphate bond of UDP-2,3-diacylglucosamine to yield 2,3-diacylglucosamine 1-phosphate (lipid X) and UMP by catalyzing the attack of water at the alpha-P atom. Involved in the biosynthesis of lipid A, a phosphorylated glycolipid that anchors the lipopolysaccharide to the outer membrane of the cell. This is UDP-2,3-diacylglucosamine hydrolase from Shewanella putrefaciens (strain CN-32 / ATCC BAA-453).